Consider the following 146-residue polypeptide: MSFRGLSRPNAISGMGVADESKTTFLELQRKKTHRYVVFKIDESKKEVVVEKTGNPTESYDDFLASLPDNDCRYAVYDFDFVTSENCQKSKIFFFAWSPSTSGIRAKVLYSTSKDQLSRELQGIHYEIQATDPTEVDLEVLRERAN.

Ser-13 is subject to Phosphoserine. Residues 14–146 (GMGVADESKT…DLEVLRERAN (133 aa)) form the ADF-H domain.

The protein belongs to the actin-binding proteins ADF family. In terms of processing, phosphorylated. Expressed in vascular tissues of all organs.

Its subcellular location is the cytoplasm. The protein resides in the cytoskeleton. In terms of biological role, actin-depolymerizing protein. Severs actin filaments (F-actin) and binds to actin monomers. This chain is Actin-depolymerizing factor 6 (ADF6), found in Arabidopsis thaliana (Mouse-ear cress).